Reading from the N-terminus, the 301-residue chain is MSHTAEIPLVPGSESPLELKPLKAADPQIVYHRRAHRLLSLAKDSPLADYFELCRRLVSIQAKLAEGADFGQLLAWGKDEATPLSLLGSEADSYWQGLLQQLLSDLLPQVDESIARVVRLLMQQSPEQLSSWGRSLRQGHVSEVPAHFSLFIWAAMGVYWSHWAPMVIKRMDQRKVAQQSMCPVCGCHPVASVIVDQPRAGLRYLHCSLCESEWHYIRAHCTSCGQDKEMTIWSLDDAQAQVRIESCDECHGYTKMMFVENSPSMDVAADDLATLMLDSELNAKGFGATTLNPLLMAHETT.

This sequence belongs to the FdhE family.

The protein resides in the cytoplasm. Functionally, necessary for formate dehydrogenase activity. This chain is Protein FdhE homolog, found in Shewanella baltica (strain OS195).